The following is a 574-amino-acid chain: Kelch-like protein 18 (574 aa).

The region spanning 66–105 (MFTNDMMECKQDEIVMQGMDPSALEALINFAYNGNLAIDQ) is the BTB domain. Residues 140–242 (CLGVRQFAET…RPQFLSDRVQ (103 aa)) form the BACK domain. 6 Kelch repeats span residues 289-336 (LIYA…VVNG), 337-383 (LLYA…VLDG), 384-430 (QIYV…VFEG), 432-477 (IYVS…SLGS), 479-524 (MFVC…ASCG), and 525-571 (RLYA…CIPL).

In terms of assembly, interacts with AURKA. Interacts (via BTB domain) with CUL3. Interacts (via kelch repeats) with UNC119.

The protein operates within protein modification; protein ubiquitination. Its function is as follows. Substrate-specific adapter of a BCR (BTB-CUL3-RBX1) E3 ubiquitin-protein ligase complex required for mitotic progression and cytokinesis. The BCR(KLHL18) E3 ubiquitin ligase complex mediates the ubiquitination of AURKA leading to its activation at the centrosome which is required for initiating mitotic entry. Regulates light-and dark-dependent alpha-transducin localization changes in rod photoreceptors through UNC119 ubiquitination and degradation. Preferentially ubiquitinates the unphosphorylated form of UNC119 over the phosphorylated form. In the presence of UNC119, under dark-adapted conditions alpha-transducin mislocalizes from the outer segment to the inner part of rod photoreceptors which leads to decreased photoreceptor damage caused by light. The chain is Kelch-like protein 18 (KLHL18) from Homo sapiens (Human).